The chain runs to 241 residues: Large ribosomal subunit protein bL25 (241 aa).

The tract at residues 214 to 241 (LDAVKAGEEGSRAQQETEEASERADQGQ) is disordered.

Belongs to the bacterial ribosomal protein bL25 family. CTC subfamily. In terms of assembly, part of the 50S ribosomal subunit; part of the 5S rRNA/L5/L18/L25 subcomplex. Contacts the 5S rRNA. Binds to the 5S rRNA independently of L5 and L18.

This is one of the proteins that binds to the 5S RNA in the ribosome where it forms part of the central protuberance. This is Large ribosomal subunit protein bL25 from Deinococcus geothermalis (strain DSM 11300 / CIP 105573 / AG-3a).